A 394-amino-acid polypeptide reads, in one-letter code: Sugar efflux transporter C (394 aa).

Over 1-10 the chain is Periplasmic; that stretch reads MQKTATTPSK. A helical transmembrane segment spans residues 11–31; the sequence is ILDLTAAAFLLVAFLTGIAGA. Residues 32 to 49 lie on the Cytoplasmic side of the membrane; it reads LQTPTLSIFLADELKARP. Residues 50 to 70 form a helical membrane-spanning segment; it reads IMVGFFFTGSAIMGILVSQFL. At 71–80 the chain is on the periplasmic side; that stretch reads ARHSDKQGDR. Residues 81 to 101 traverse the membrane as a helical segment; it reads KLLILLCCLFGVLACTLFAWN. At 102–104 the chain is on the cytoplasmic side; the sequence is RNY. A helical transmembrane segment spans residues 105–125; it reads FILLSTGVLLSSFASTANPQM. The Periplasmic portion of the chain corresponds to 126 to 150; that stretch reads FALAREHADRTGRETVMFSTFLRAQ. The helical transmembrane segment at 151-171 threads the bilayer; that stretch reads ISLAWVIGPPLAYELAMGFSF. Position 172 (Lys-172) is a topological domain, cytoplasmic. Residues 173-193 form a helical membrane-spanning segment; the sequence is VMYLTAAIAFVVCGLIVWLFL. Topologically, residues 194–224 are periplasmic; the sequence is PSIQRNIPVVTQPVEILPSTHRKRDTRLLFV. Residues 225 to 245 form a helical membrane-spanning segment; that stretch reads VCSMMWAANNLYMINMPLFII. The Cytoplasmic portion of the chain corresponds to 246–253; the sequence is DELHLTDK. Residues 254–274 form a helical membrane-spanning segment; the sequence is LTGEMIGIAAGLEIPMMLIAG. Over 275 to 283 the chain is Periplasmic; that stretch reads YYMKRIGKR. The helical transmembrane segment at 284 to 304 threads the bilayer; the sequence is LLMLIAIVSGMCFYASVLMAT. Topologically, residues 305-310 are cytoplasmic; the sequence is TPAVEL. A helical transmembrane segment spans residues 311–331; it reads ELQILNAIFLGILCGIGMLYF. At 332 to 370 the chain is on the periplasmic side; that stretch reads QDLMPEKIGSATTLYANTSRVGWIIAGSVDGIMVEIWSY. The helical transmembrane segment at 371–391 threads the bilayer; the sequence is HALFWLAIGMLGIAMICLLFI. The Cytoplasmic portion of the chain corresponds to 392–394; the sequence is KDI.

It belongs to the major facilitator superfamily. Set transporter family.

Its subcellular location is the cell inner membrane. Involved in the efflux of sugars. The physiological role may be the detoxification of non-metabolizable sugar analogs. This Escherichia coli (strain K12) protein is Sugar efflux transporter C (setC).